The chain runs to 229 residues: UPF0758 protein MM_2791 (229 aa).

An MPN domain is found at Lys106 to Val228. Zn(2+) contacts are provided by His177, His179, and Asp190. Positions His177–Asp190 match the JAMM motif motif.

The protein belongs to the UPF0758 family.

This chain is UPF0758 protein MM_2791, found in Methanosarcina mazei (strain ATCC BAA-159 / DSM 3647 / Goe1 / Go1 / JCM 11833 / OCM 88) (Methanosarcina frisia).